The following is a 193-amino-acid chain: MTDYLLLFVGTVLVNNFVLVKFLGLCPFMGVSKKLETAMGMGLATTFVMTLASICAWLIDTWILIPLDLIYLRTLAFILVIAVVVQFTEMVVRKTSPALYRLLGIFLPLITTNCAVLGVALLNINLGHHFLQSALYGFSAAVGFSLVMVLFAAIRERLAVADVPAPFRGNAIALITAGLMSLAFMGFSGLVKL.

6 helical membrane passes run 5–25 (LLLF…FLGL), 47–67 (FVMT…LIPL), 72–92 (LRTL…EMVV), 102–122 (LLGI…VALL), 134–154 (ALYG…FAAI), and 171–191 (AIAL…SGLV).

The protein belongs to the NqrDE/RnfAE family. As to quaternary structure, the complex is composed of six subunits: RsxA, RsxB, RsxC, RsxD, RsxE and RsxG.

The protein resides in the cell inner membrane. In terms of biological role, part of a membrane-bound complex that couples electron transfer with translocation of ions across the membrane. Required to maintain the reduced state of SoxR. This chain is Ion-translocating oxidoreductase complex subunit A, found in Salmonella agona (strain SL483).